The primary structure comprises 644 residues: Anti-sigma-I factor RsgI3 (644 aa).

Residues 1-56 are Cytoplasmic-facing; the sequence is MDNIGVIIKIEGNEAIVMTDDCSFKKVPIKDGMHPGQKILVPNNEVIQKENKSIKR. Residues 3-50 form the RsgI N-terminal anti-sigma domain; it reads NIGVIIKIEGNEAIVMTDDCSFKKVPIKDGMHPGQKILVPNNEVIQKE. A helical membrane pass occupies residues 57 to 77; sequence ISAVATGIAAVFLMVLSLIWI. Topologically, residues 78–644 are extracellular; sequence NKPGRPDGIY…VVPSKNLFAD (567 aa). The segment covering 302–328 has biased composition (polar residues); that stretch reads PTNTPSISTKPSATPAENPTPKLTQKP. Residues 302-359 are disordered; it reads PTNTPSISTKPSATPAENPTPKLTQKPTPVPAKTGERTSTTPTPTPAPTVRNGTGSGL. 2 PA14 domains span residues 354 to 491 and 502 to 640; these read GTGS…PSSQ and KDVN…PSKN.

As to quaternary structure, interacts (via RsgI N-terminal anti-sigma domain) with SigI3.

The protein resides in the cell membrane. Anti-sigma factor for SigI3. Negatively regulates SigI3 activity through direct interaction. Binding of the polysaccharide substrate to the extracellular C-terminal sensing domain of RsgI3 may induce a conformational change in its N-terminal cytoplasmic region, leading to the release and activation of SigI3. The chain is Anti-sigma-I factor RsgI3 from Acetivibrio thermocellus (strain ATCC 27405 / DSM 1237 / JCM 9322 / NBRC 103400 / NCIMB 10682 / NRRL B-4536 / VPI 7372) (Clostridium thermocellum).